The primary structure comprises 472 residues: Flap endonuclease 1 (472 aa).

Residues 1–106 (MGIKGLARFL…EELMKRKERR (106 aa)) form an N-domain region. Residue aspartate 34 participates in Mg(2+) binding. DNA-binding residues include arginine 47 and arginine 72. Mg(2+) is bound by residues aspartate 88, glutamate 160, glutamate 162, aspartate 181, and aspartate 183. Positions 124–263 (TIRKQLIRTI…LTAYKLLKKH (140 aa)) are I-domain. Glutamate 160 is a binding site for DNA. DNA contacts are provided by glycine 241 and aspartate 243. Aspartate 243 is a Mg(2+) binding site. An interaction with PCNA region spans residues 348 to 356 (AQTSLDSFF).

It belongs to the XPG/RAD2 endonuclease family. FEN1 subfamily. Interacts with PCNA. Three molecules of FEN1 bind to one PCNA trimer with each molecule binding to one PCNA monomer. PCNA stimulates the nuclease activity without altering cleavage specificity. Mg(2+) serves as cofactor. Post-translationally, phosphorylated. Phosphorylation upon DNA damage induces relocalization to the nuclear plasma.

It localises to the nucleus. The protein resides in the nucleolus. Its subcellular location is the nucleoplasm. It is found in the mitochondrion. In terms of biological role, structure-specific nuclease with 5'-flap endonuclease and 5'-3' exonuclease activities involved in DNA replication and repair. During DNA replication, cleaves the 5'-overhanging flap structure that is generated by displacement synthesis when DNA polymerase encounters the 5'-end of a downstream Okazaki fragment. It enters the flap from the 5'-end and then tracks to cleave the flap base, leaving a nick for ligation. Also involved in the long patch base excision repair (LP-BER) pathway, by cleaving within the apurinic/apyrimidinic (AP) site-terminated flap. Acts as a genome stabilization factor that prevents flaps from equilibrating into structures that lead to duplications and deletions. Also possesses 5'-3' exonuclease activity on nicked or gapped double-stranded DNA, and exhibits RNase H activity. Also involved in replication and repair of rDNA and in repairing mitochondrial DNA. The sequence is that of Flap endonuclease 1 from Cryptosporidium muris (strain RN66).